We begin with the raw amino-acid sequence, 283 residues long: Pantothenate synthetase 1 (283 aa).

Position 30–37 (30–37 (MGYLHDGH)) interacts with ATP. H37 functions as the Proton donor in the catalytic mechanism. Q61 provides a ligand contact to (R)-pantoate. Q61 provides a ligand contact to beta-alanine. 147–150 (GQKD) serves as a coordination point for ATP. Q153 serves as a coordination point for (R)-pantoate. ATP contacts are provided by residues V176 and 184-187 (MSSR).

It belongs to the pantothenate synthetase family. In terms of assembly, homodimer.

It is found in the cytoplasm. The enzyme catalyses (R)-pantoate + beta-alanine + ATP = (R)-pantothenate + AMP + diphosphate + H(+). It participates in cofactor biosynthesis; (R)-pantothenate biosynthesis; (R)-pantothenate from (R)-pantoate and beta-alanine: step 1/1. In terms of biological role, catalyzes the condensation of pantoate with beta-alanine in an ATP-dependent reaction via a pantoyl-adenylate intermediate. The protein is Pantothenate synthetase 1 of Bradyrhizobium diazoefficiens (strain JCM 10833 / BCRC 13528 / IAM 13628 / NBRC 14792 / USDA 110).